The sequence spans 509 residues: Serine/threonine protein kinase OSK4 (509 aa).

In terms of domain architecture, Protein kinase spans 17–269; it reads YNLGRTLGIG…IREIREHQWF (253 aa). Residues 23 to 31 and K46 each bind ATP; that span reads LGIGSFGKV. Residue D140 is the Proton acceptor of the active site. Positions 290-330 constitute a UBA domain; it reads MIDEDTLQDVVNLGYEKDHVCESLRNRLQNEATVAYYLLLD. Residues 460–508 form the KA1 domain; it reads NGRLPAVIKFEIQLYKSRDEKYLLDMQRVTGPQLLFLDFCAAFLTKLRV.

Belongs to the protein kinase superfamily. Ser/Thr protein kinase family. Interacts with HDR1. In terms of tissue distribution, strongly expressed in immature seeds. Mostly expressed in panicles, leaf sheaths and roots, and to a lower extent, in germinating seeds and leaf blades.

Its subcellular location is the nucleus. The catalysed reaction is L-seryl-[protein] + ATP = O-phospho-L-seryl-[protein] + ADP + H(+). It carries out the reaction L-threonyl-[protein] + ATP = O-phospho-L-threonyl-[protein] + ADP + H(+). Functionally, suppressor of flowering in long days (LD) via the that up-regulation of HD1 and the down-regulation of EHD1. Can phosphorylate HD1 in the presence of HDR1. The chain is Serine/threonine protein kinase OSK4 from Oryza sativa subsp. indica (Rice).